Reading from the N-terminus, the 382-residue chain is tRNA(Ile)-lysidine synthase (382 aa).

50-55 (SGGRDS) provides a ligand contact to ATP.

The protein belongs to the tRNA(Ile)-lysidine synthase family.

The protein localises to the cytoplasm. It catalyses the reaction cytidine(34) in tRNA(Ile2) + L-lysine + ATP = lysidine(34) in tRNA(Ile2) + AMP + diphosphate + H(+). Its function is as follows. Ligates lysine onto the cytidine present at position 34 of the AUA codon-specific tRNA(Ile) that contains the anticodon CAU, in an ATP-dependent manner. Cytidine is converted to lysidine, thus changing the amino acid specificity of the tRNA from methionine to isoleucine. The protein is tRNA(Ile)-lysidine synthase of Bifidobacterium animalis subsp. lactis (strain AD011).